Consider the following 37-residue polypeptide: Cytochrome b6-f complex subunit 5 (37 aa).

The chain crosses the membrane as a helical span at residues 5 to 25 (LLSGIVLGLVPITLAGLFVTA).

This sequence belongs to the PetG family. As to quaternary structure, the 4 large subunits of the cytochrome b6-f complex are cytochrome b6, subunit IV (17 kDa polypeptide, PetD), cytochrome f and the Rieske protein, while the 4 small subunits are PetG, PetL, PetM and PetN. The complex functions as a dimer.

It localises to the plastid. It is found in the chloroplast thylakoid membrane. Component of the cytochrome b6-f complex, which mediates electron transfer between photosystem II (PSII) and photosystem I (PSI), cyclic electron flow around PSI, and state transitions. PetG is required for either the stability or assembly of the cytochrome b6-f complex. This Gnetum parvifolium (Small-leaved jointfir) protein is Cytochrome b6-f complex subunit 5.